A 173-amino-acid polypeptide reads, in one-letter code: MSIILGIDPGSRITGYGVIRQVGRQLTYLGSGCIRTKVDDLPSRLKLIYAGVSEIITQFQPDFFAIEQVFMAKNADSALKLGQARGVAIVAAVNQDLPVFEYAARQVKQTVVGTGGAAKSQVQHMVRTLLKLQANPQADAADALAIAITHCHVTQNSMQMSESRLSLARGRLR.

Catalysis depends on residues D8, E67, and D139. Mg(2+) contacts are provided by D8, E67, and D139.

This sequence belongs to the RuvC family. As to quaternary structure, homodimer which binds Holliday junction (HJ) DNA. The HJ becomes 2-fold symmetrical on binding to RuvC with unstacked arms; it has a different conformation from HJ DNA in complex with RuvA. In the full resolvosome a probable DNA-RuvA(4)-RuvB(12)-RuvC(2) complex forms which resolves the HJ. Mg(2+) is required as a cofactor.

It localises to the cytoplasm. It carries out the reaction Endonucleolytic cleavage at a junction such as a reciprocal single-stranded crossover between two homologous DNA duplexes (Holliday junction).. Its function is as follows. The RuvA-RuvB-RuvC complex processes Holliday junction (HJ) DNA during genetic recombination and DNA repair. Endonuclease that resolves HJ intermediates. Cleaves cruciform DNA by making single-stranded nicks across the HJ at symmetrical positions within the homologous arms, yielding a 5'-phosphate and a 3'-hydroxyl group; requires a central core of homology in the junction. The consensus cleavage sequence is 5'-(A/T)TT(C/G)-3'. Cleavage occurs on the 3'-side of the TT dinucleotide at the point of strand exchange. HJ branch migration catalyzed by RuvA-RuvB allows RuvC to scan DNA until it finds its consensus sequence, where it cleaves and resolves the cruciform DNA. The protein is Crossover junction endodeoxyribonuclease RuvC of Enterobacter sp. (strain 638).